Here is a 516-residue protein sequence, read N- to C-terminus: Endoglucanase 17 (516 aa).

A signal peptide spans 1-29; it reads MALLLVSSSSSYALRVTIFLSFFFFLCNG. Residue D105 is the Nucleophile of the active site. Active-site residues include H433, D484, and E493.

The protein belongs to the glycosyl hydrolase 9 (cellulase E) family.

It localises to the secreted. The catalysed reaction is Endohydrolysis of (1-&gt;4)-beta-D-glucosidic linkages in cellulose, lichenin and cereal beta-D-glucans.. This chain is Endoglucanase 17, found in Arabidopsis thaliana (Mouse-ear cress).